We begin with the raw amino-acid sequence, 687 residues long: Polyphosphate kinase (687 aa).

ATP is bound at residue asparagine 45. Mg(2+) is bound by residues arginine 375 and arginine 405. Histidine 435 functions as the Phosphohistidine intermediate in the catalytic mechanism. Residues tyrosine 472, arginine 568, and histidine 596 each coordinate ATP.

The protein belongs to the polyphosphate kinase 1 (PPK1) family. Mg(2+) serves as cofactor. Post-translationally, an intermediate of this reaction is the autophosphorylated ppk in which a phosphate is covalently linked to a histidine residue through a N-P bond.

The enzyme catalyses [phosphate](n) + ATP = [phosphate](n+1) + ADP. Catalyzes the reversible transfer of the terminal phosphate of ATP to form a long-chain polyphosphate (polyP). The protein is Polyphosphate kinase of Burkholderia cenocepacia (strain HI2424).